The chain runs to 285 residues: Diaminopimelate epimerase (285 aa).

Residues Asn-15 and Asn-68 each coordinate substrate. Cys-77 serves as the catalytic Proton donor. Substrate-binding positions include 78 to 79, Asn-165, Asn-201, and 219 to 220; these read GN and ER. The active-site Proton acceptor is the Cys-228. Position 229-230 (229-230) interacts with substrate; the sequence is GT.

Belongs to the diaminopimelate epimerase family. Homodimer.

The protein localises to the cytoplasm. It carries out the reaction (2S,6S)-2,6-diaminopimelate = meso-2,6-diaminopimelate. The protein operates within amino-acid biosynthesis; L-lysine biosynthesis via DAP pathway; DL-2,6-diaminopimelate from LL-2,6-diaminopimelate: step 1/1. Functionally, catalyzes the stereoinversion of LL-2,6-diaminopimelate (L,L-DAP) to meso-diaminopimelate (meso-DAP), a precursor of L-lysine and an essential component of the bacterial peptidoglycan. This Synechococcus sp. (strain JA-3-3Ab) (Cyanobacteria bacterium Yellowstone A-Prime) protein is Diaminopimelate epimerase.